The sequence spans 218 residues: Ras-related protein Rab-11B (218 aa).

Glycine 2 carries the post-translational modification N-acetylglycine. Residue arginine 4 is modified to Citrulline. Positions 20, 21, 23, 24, 25, 26, 37, 38, 40, 42, and 43 each coordinate GTP. Serine 25 is a Mg(2+) binding site. Positions 36-47 match the Switch 1 motif; that stretch reads FNLESKSTIGVE. Threonine 43 and aspartate 66 together coordinate Mg(2+). Residues 67-86 carry the Switch 2 motif; that stretch reads TAGQERYRAITSAYYRGAVG. 6 residues coordinate GTP: glycine 69, asparagine 124, lysine 125, aspartate 127, alanine 155, and leucine 156. Residues 184–218 form a disordered region; that stretch reads RAAHDESPGNNVVDISVPPTTDGQRPNKLQCCQSL. S-geranylgeranyl cysteine attachment occurs at residues cysteine 214 and cysteine 215. Cysteine 215 carries the post-translational modification Cysteine methyl ester. Residues 216–218 constitute a propeptide, removed in mature form; it reads QSL.

This sequence belongs to the small GTPase superfamily. Rab family. In terms of assembly, interacts with KCNMA1. Interacts with RAB11FIP1, RAB11FIP2, RAB11FIP3 and RAB11FIP4. May interact with TBC1D14. Interacts with ATP6V1E1. Interacts with PI4KB. Interacts (GDP-bound form) with ZFYVE27. Interacts (GDP-bound form) with KIF5A in a ZFYVE27-dependent manner. Interacts with RELCH. Interacts (in GTP-bound form) with TBC1D8B (via domain Rab-GAP TBC). Forms a complex containing RAB11B, ASAP1, Rabin8/RAB3IP, RAP11FIP3 and ARF4. Interacts with WDR44. The cofactor is Mg(2+). Post-translationally, citrullinated by PADI4. In terms of tissue distribution, abundantly expressed in brain, heart and testis. Also detected in kidney and pancreatic islets.

Its subcellular location is the recycling endosome membrane. The protein resides in the cytoplasmic vesicle. The protein localises to the secretory vesicle. It localises to the synaptic vesicle membrane. It is found in the phagosome membrane. It catalyses the reaction GTP + H2O = GDP + phosphate + H(+). Regulated by guanine nucleotide exchange factors (GEFs) which promote the exchange of bound GDP for free GTP. Regulated by GTPase activating proteins (GAPs) which increase the GTP hydrolysis activity. Inhibited by GDP dissociation inhibitors (GDIs) which prevent Rab-GDP dissociation. In terms of biological role, the small GTPases Rab are key regulators of intracellular membrane trafficking, from the formation of transport vesicles to their fusion with membranes. Rabs cycle between an inactive GDP-bound form and an active GTP-bound form that is able to recruit to membranes different set of downstream effectors directly responsible for vesicle formation, movement, tethering and fusion. The small Rab GTPase RAB11B plays a role in endocytic recycling, regulating apical recycling of several transmembrane proteins including cystic fibrosis transmembrane conductance regulator/CFTR, epithelial sodium channel/ENaC, potassium voltage-gated channel, and voltage-dependent L-type calcium channel. May also regulate constitutive and regulated secretion, like insulin granule exocytosis. Required for melanosome transport and release from melanocytes. Also regulates V-ATPase intracellular transport in response to extracellular acidosis. Promotes Rabin8/RAB3IP preciliary vesicular trafficking to mother centriole by forming a ciliary targeting complex containing Rab11, ASAP1, Rabin8/RAB3IP, RAB11FIP3 and ARF4, thereby regulating ciliogenesis initiation. On the contrary, upon LPAR1 receptor signaling pathway activation, interaction with phosphorylated WDR44 prevents Rab11-RAB3IP-RAB11FIP3 complex formation and cilia growth. This Mus musculus (Mouse) protein is Ras-related protein Rab-11B.